A 184-amino-acid polypeptide reads, in one-letter code: Ribosome-recycling factor (184 aa).

This sequence belongs to the RRF family.

The protein resides in the cytoplasm. Functionally, responsible for the release of ribosomes from messenger RNA at the termination of protein biosynthesis. May increase the efficiency of translation by recycling ribosomes from one round of translation to another. The polypeptide is Ribosome-recycling factor (Stenotrophomonas maltophilia (strain K279a)).